Here is a 259-residue protein sequence, read N- to C-terminus: Probable 6-phosphogluconolactonase 2 (259 aa).

This sequence belongs to the glucosamine/galactosamine-6-phosphate isomerase family. 6-phosphogluconolactonase subfamily.

It is found in the cytoplasm. It localises to the cytosol. The enzyme catalyses 6-phospho-D-glucono-1,5-lactone + H2O = 6-phospho-D-gluconate + H(+). It participates in carbohydrate degradation; pentose phosphate pathway; D-ribulose 5-phosphate from D-glucose 6-phosphate (oxidative stage): step 2/3. Its function is as follows. Catalyzes the hydrolysis of 6-phosphogluconolactone to 6-phosphogluconate. The chain is Probable 6-phosphogluconolactonase 2 from Arabidopsis thaliana (Mouse-ear cress).